Reading from the N-terminus, the 247-residue chain is uncharacterized protein (247 aa).

It localises to the mitochondrion. This is an uncharacterized protein from Schizosaccharomyces pombe (strain 972 / ATCC 24843) (Fission yeast).